The primary structure comprises 114 residues: Nucleoid-associated protein Amet_4780 (114 aa).

The segment at 23–42 is disordered; the sequence is QKMQKDMEKTQAALEEKEVE. The span at 25-42 shows a compositional bias: basic and acidic residues; it reads MQKDMEKTQAALEEKEVE.

It belongs to the YbaB/EbfC family. Homodimer.

The protein resides in the cytoplasm. Its subcellular location is the nucleoid. Functionally, binds to DNA and alters its conformation. May be involved in regulation of gene expression, nucleoid organization and DNA protection. The polypeptide is Nucleoid-associated protein Amet_4780 (Alkaliphilus metalliredigens (strain QYMF)).